An 89-amino-acid polypeptide reads, in one-letter code: Small ribosomal subunit protein uS15 (89 aa).

It belongs to the universal ribosomal protein uS15 family. Part of the 30S ribosomal subunit. Forms a bridge to the 50S subunit in the 70S ribosome, contacting the 23S rRNA.

Functionally, one of the primary rRNA binding proteins, it binds directly to 16S rRNA where it helps nucleate assembly of the platform of the 30S subunit by binding and bridging several RNA helices of the 16S rRNA. Its function is as follows. Forms an intersubunit bridge (bridge B4) with the 23S rRNA of the 50S subunit in the ribosome. The protein is Small ribosomal subunit protein uS15 of Beijerinckia indica subsp. indica (strain ATCC 9039 / DSM 1715 / NCIMB 8712).